The primary structure comprises 39 residues: Cytochrome b559 subunit beta (39 aa).

A helical transmembrane segment spans residues 14 to 30 (WLAIHGLAVPTVFFLGS). Histidine 18 is a binding site for heme.

Belongs to the PsbE/PsbF family. Heterodimer of an alpha subunit and a beta subunit. PSII is composed of 1 copy each of membrane proteins PsbA, PsbB, PsbC, PsbD, PsbE, PsbF, PsbH, PsbI, PsbJ, PsbK, PsbL, PsbM, PsbT, PsbX, PsbY, PsbZ, Psb30/Ycf12, at least 3 peripheral proteins of the oxygen-evolving complex and a large number of cofactors. It forms dimeric complexes. Requires heme b as cofactor.

It localises to the plastid. The protein resides in the chloroplast thylakoid membrane. In terms of biological role, this b-type cytochrome is tightly associated with the reaction center of photosystem II (PSII). PSII is a light-driven water:plastoquinone oxidoreductase that uses light energy to abstract electrons from H(2)O, generating O(2) and a proton gradient subsequently used for ATP formation. It consists of a core antenna complex that captures photons, and an electron transfer chain that converts photonic excitation into a charge separation. The sequence is that of Cytochrome b559 subunit beta from Ephedra sinica (Chinese ephedra).